Here is a 158-residue protein sequence, read N- to C-terminus: Small ribosomal subunit protein eS10 (158 aa).

The disordered stretch occupies residues 99-158 (ETVRRGAVGRPDAPARSAEDRSAYRRAPTTPAAHDKKADVGPGSADLEFRGGFGRGRPAP). Positions 149-158 (GGFGRGRPAP) are enriched in gly residues.

This sequence belongs to the eukaryotic ribosomal protein eS10 family.

It is found in the cytoplasm. In Spodoptera frugiperda (Fall armyworm), this protein is Small ribosomal subunit protein eS10 (RpS10).